A 600-amino-acid chain; its full sequence is Dihydroxy-acid dehydratase (600 aa).

Asp82 provides a ligand contact to Mg(2+). Cys123 is a [2Fe-2S] cluster binding site. Residues Asp124 and Lys125 each coordinate Mg(2+). The residue at position 125 (Lys125) is an N6-carboxylysine. Cys192 is a binding site for [2Fe-2S] cluster. Glu489 contacts Mg(2+). Residue Ser515 is the Proton acceptor of the active site.

This sequence belongs to the IlvD/Edd family. Homodimer. It depends on [2Fe-2S] cluster as a cofactor. Mg(2+) is required as a cofactor.

It carries out the reaction (2R)-2,3-dihydroxy-3-methylbutanoate = 3-methyl-2-oxobutanoate + H2O. The catalysed reaction is (2R,3R)-2,3-dihydroxy-3-methylpentanoate = (S)-3-methyl-2-oxopentanoate + H2O. It participates in amino-acid biosynthesis; L-isoleucine biosynthesis; L-isoleucine from 2-oxobutanoate: step 3/4. The protein operates within amino-acid biosynthesis; L-valine biosynthesis; L-valine from pyruvate: step 3/4. Functions in the biosynthesis of branched-chain amino acids. Catalyzes the dehydration of (2R,3R)-2,3-dihydroxy-3-methylpentanoate (2,3-dihydroxy-3-methylvalerate) into 2-oxo-3-methylpentanoate (2-oxo-3-methylvalerate) and of (2R)-2,3-dihydroxy-3-methylbutanoate (2,3-dihydroxyisovalerate) into 2-oxo-3-methylbutanoate (2-oxoisovalerate), the penultimate precursor to L-isoleucine and L-valine, respectively. This Phocaeicola vulgatus (strain ATCC 8482 / DSM 1447 / JCM 5826 / CCUG 4940 / NBRC 14291 / NCTC 11154) (Bacteroides vulgatus) protein is Dihydroxy-acid dehydratase.